The following is a 393-amino-acid chain: Zinc-regulated GTPase metalloprotein activator 1 (393 aa).

The short motif at E16 to P23 is the psi-PxLVp motif element. A GTP-binding site is contributed by G47 to T54. 3 residues coordinate Zn(2+): C105, C107, and C108. The short motif at C105–C108 is the CXCC motif element. Residues C108–D112 and N201–D204 contribute to the GTP site. The CobW C-terminal domain maps to I271–V374.

The protein belongs to the SIMIBI class G3E GTPase family. ZNG1 subfamily. In terms of tissue distribution, present at high level in the nuclei of the ureteric bud cells in the developing kidneys.

The protein localises to the nucleus. It catalyses the reaction GTP + H2O = GDP + phosphate + H(+). Zinc chaperone that directly transfers zinc cofactor to target metalloproteins, thereby activating them. Catalyzes zinc insertion into the active site of methionine aminopeptidase METAP1, which function to cleave the initiator methionine from polypeptides during or after protein translation. Mechanistically, the N-terminal psi-PxLVp motif binds to the C6H2-type zinc finger of inactive form of METAP1. After formation of the docked complex, zinc is transferred from the CXCC motif in the GTPase domain of ZNG1 to the zinc binding site in the peptidase domain of METAP1 in a process requiring GTP hydrolysis. GTP/GDP exchange is required for release of active METAP1. The sequence is that of Zinc-regulated GTPase metalloprotein activator 1 (Zng1) from Mus musculus (Mouse).